Reading from the N-terminus, the 984-residue chain is MDCHLSILILFGCCVLSCSRELSPQPSNEVNLLDSKTIQGELGWISYPSHGWEEISGVDEHYTPIRTYQVCNVMDHSQNNWLRTNWVPRNSAQKIYVELKFTLRDCNSIPLVLGTCKETFNLYYMESDDDHGVKFLEHQFTKIDTIAADESFTQMDLGDRILKLNTEIREVGPVNKKGFYLAFQDVGACVALVSVRVYFKKCPFTVKNLAMFPDTVPMDSQSLVEVRGSCVNNSKEEDPPRMYCSTEGEWLVPIGKCTCNAGYEERGFICQACRPGFYKALDGVAKCTKCPPHSSTQEDGSMNCRCENNYFRAEKDPPSMACTRPPSAPRNVISNINETSVILDWSWPLDTGGRKDITFNIICKKCGWNVRQCEPCSPNVRFLPRQLGLTNTTVTVTDLLAHTNYTFEIDAINGVSELSSPPRQFAAVSITTNQAAPSPVMTIKKDRTSRNSISLSWQEPEHPNGIILDYEVKYYEKQEQETSYTILRARGTNVTISSLKPDTTYVFQIRARTAAGYGTNSRKFEFENSPDSFSISGENSHVVMIAISAAVAIIVLTVVTYVLVGRFCGYHKSKHSSDEKRLHFGNGHLRLPGLRTYVDPHTYEDPTQAVHEFAKELDATNIAIDKVVGAGEFGEVCSGRLKLPSKKEISVAIKTLKVGYTEKQRRDFLGEASIMGQFDHPNIIRLEGVVTKSKPVMIVTEYMENGSLDSFLRKHDAQFTVIQLVGMLRGIASGMKYLSDMGYVHRDLAARNILINSNLVCKVSDFGLSRVLEDDPEAAYTTRGGKIPVRWTSPEATAYRKFTSASDVWSYGIVLWEVMSYGERPYWEMSNQDVIKAVDEGYRLPLPMDCPAALYQLMLDCWQKDRNNRPKFEQIVSILDKLIRNPGSLKIITSAAARPSNLLLDQSNVDIATFHTTGDWLNGMRTAHCKEIFTGVEYSSCDTIAKISTDDMKKVGVTVVGPQKKIISSIKALETQSKNGPVPV.

The signal sequence occupies residues 1–20; sequence MDCHLSILILFGCCVLSCSR. The Extracellular portion of the chain corresponds to 21–541; it reads ELSPQPSNEV…SFSISGENSH (521 aa). The Eph LBD domain maps to 29-207; sequence EVNLLDSKTI…YFKKCPFTVK (179 aa). N-linked (GlcNAc...) asparagine glycans are attached at residues N232, N337, N391, N404, and N493. Fibronectin type-III domains lie at 325–435 and 436–532; these read PPSA…TNQA and APSP…SPDS. Residues 542 to 565 traverse the membrane as a helical segment; the sequence is VVMIAISAAVAIIVLTVVTYVLVG. Over 566 to 984 the chain is Cytoplasmic; that stretch reads RFCGYHKSKH…TQSKNGPVPV (419 aa). 2 positions are modified to phosphotyrosine; by autocatalysis: Y597 and Y603. Residues 622 to 883 enclose the Protein kinase domain; sequence IAIDKVVGAG…QIVSILDKLI (262 aa). ATP is bound by residues 629 to 634, K654, and 701 to 707; these read GAGEFG and EYMENGS. The residue at position 702 (Y702) is a Phosphotyrosine; by autocatalysis. D747 functions as the Proton acceptor in the catalytic mechanism. 751–752 is a binding site for ATP; the sequence is RN. Phosphotyrosine; by autocatalysis is present on Y780. The 65-residue stretch at 912–976 folds into the SAM domain; it reads ATFHTTGDWL…ISSIKALETQ (65 aa). Y938 carries the phosphotyrosine modification. The PDZ-binding signature appears at 982–984; the sequence is VPV.

It belongs to the protein kinase superfamily. Tyr protein kinase family. Ephrin receptor subfamily. Heterotetramer upon binding of the ligand. The heterotetramer is composed of an ephrin dimer and a receptor dimer. Oligomerization is probably required to induce biological responses. Forms a ternary EFNA5-EPHA3-ADAM10 complex mediating EFNA5 extracellular domain shedding by ADAM10 which regulates the EFNA5-EPHA3 complex internalization and function. Interacts (phosphorylated) with PTPN1; dephosphorylates EPHA3 and may regulate its trafficking and function. Interacts (phosphorylated) with CRK; mediates EFNA5-EPHA3 signaling through RHOA GTPase activation. Interacts with NCK1 (via SH2 domain); mediates EFNA5-EPHA3 signaling. Post-translationally, autophosphorylates upon activation by EFNA5. Phosphorylation on Tyr-603 mediates interaction with NCK1. Dephosphorylated by PTPN1. As to expression, most abundant in the heart, brain and lung.

The protein localises to the cell membrane. The catalysed reaction is L-tyrosyl-[protein] + ATP = O-phospho-L-tyrosyl-[protein] + ADP + H(+). Its function is as follows. Receptor tyrosine kinase which binds promiscuously membrane-bound ephrin family ligands residing on adjacent cells, leading to contact-dependent bidirectional signaling into neighboring cells. The signaling pathway downstream of the receptor is referred to as forward signaling while the signaling pathway downstream of the ephrin ligand is referred to as reverse signaling. Highly promiscuous for ephrin-A ligands it binds preferentially EFNA5. Upon activation by EFNA5 regulates cell-cell adhesion, cytoskeletal organization and cell migration. Plays a role in cardiac cells migration and differentiation and regulates the formation of the atrioventricular canal and septum during development probably through activation by EFNA1. Involved in the retinotectal mapping of neurons. May also control the segregation but not the guidance of motor and sensory axons during neuromuscular circuit development. This chain is Ephrin type-A receptor 3 (Epha3), found in Rattus norvegicus (Rat).